The chain runs to 105 residues: Large ribosomal subunit protein uL23 (105 aa).

It belongs to the universal ribosomal protein uL23 family. As to quaternary structure, part of the 50S ribosomal subunit. Contacts protein L29, and trigger factor when it is bound to the ribosome.

Its function is as follows. One of the early assembly proteins it binds 23S rRNA. One of the proteins that surrounds the polypeptide exit tunnel on the outside of the ribosome. Forms the main docking site for trigger factor binding to the ribosome. In Ureaplasma parvum serovar 3 (strain ATCC 27815 / 27 / NCTC 11736), this protein is Large ribosomal subunit protein uL23.